A 772-amino-acid chain; its full sequence is RNA exonuclease 5 (772 aa).

A compositionally biased stretch (basic and acidic residues) spans M1 to R10. Positions M1–V26 are disordered. Positions H11–A21 are enriched in basic residues. Positions L228–A376 constitute an Exonuclease domain. RRM domains are found at residues S505 to T579 and G600 to H679.

The sequence is that of RNA exonuclease 5 (REXO5) from Macaca fascicularis (Crab-eating macaque).